We begin with the raw amino-acid sequence, 442 residues long: GTPase Der (442 aa).

EngA-type G domains follow at residues 3-167 (PTIV…PPDV) and 177-350 (PRIA…AAAM). GTP is bound by residues 9–16 (GRPNVGKS), 56–60 (DTAGF), 119–122 (NKSE), 183–190 (GRPNVGKS), 230–234 (DTAGL), and 295–298 (NKWD). In terms of domain architecture, KH-like spans 351 to 435 (VNLSTPRLTR…PLRIQFRTAH (85 aa)).

The protein belongs to the TRAFAC class TrmE-Era-EngA-EngB-Septin-like GTPase superfamily. EngA (Der) GTPase family. Associates with the 50S ribosomal subunit.

In terms of biological role, GTPase that plays an essential role in the late steps of ribosome biogenesis. The polypeptide is GTPase Der (Aromatoleum aromaticum (strain DSM 19018 / LMG 30748 / EbN1) (Azoarcus sp. (strain EbN1))).